Here is a 508-residue protein sequence, read N- to C-terminus: Histone acetyltransferase type B catalytic subunit (508 aa).

Interaction with histone H4 N-terminus stretches follow at residues E44 to E46 and Y207 to Y209. Residues F249–I251 and Q256–S262 each bind acetyl-CoA. The active-site Proton donor/acceptor is the E284. Disordered stretches follow at residues S364 to E399 and Q461 to A508. A compositionally biased stretch (basic and acidic residues) spans K387–E399.

The protein belongs to the HAT1 family. As to quaternary structure, component of the HAT-B complex composed of at least hat-1 and hat-2. The HAT-B complex binds to histone H4 tail.

The protein resides in the cytoplasm. It is found in the nucleus. The enzyme catalyses L-lysyl-[protein] + acetyl-CoA = N(6)-acetyl-L-lysyl-[protein] + CoA + H(+). In terms of biological role, catalytic component of the histone acetylase B (HAT-B) complex. Acetylates 'Lys-12' of histone H4 which is required for telomeric silencing. Has intrinsic substrate specificity that modifies lysine in recognition sequence GXGKXG. Involved in DNA double-strand break repair. In Neurospora crassa (strain ATCC 24698 / 74-OR23-1A / CBS 708.71 / DSM 1257 / FGSC 987), this protein is Histone acetyltransferase type B catalytic subunit (hat-1).